Reading from the N-terminus, the 77-residue chain is RNA-binding protein Hfq (77 aa).

The 60-residue stretch at 9 to 68 folds into the Sm domain; that stretch reads DPFLNALRKEHIPVAIYLVNGIKLQGQIESFDQFVILLKNTVSQMVYKHAISTVVPARAI.

The protein belongs to the Hfq family. Homohexamer.

In terms of biological role, RNA chaperone that binds small regulatory RNA (sRNAs) and mRNAs to facilitate mRNA translational regulation in response to envelope stress, environmental stress and changes in metabolite concentrations. Also binds with high specificity to tRNAs. This Psychromonas ingrahamii (strain DSM 17664 / CCUG 51855 / 37) protein is RNA-binding protein Hfq.